The chain runs to 172 residues: Probable calcium-binding protein CML28 (172 aa).

EF-hand domains lie at 1–36 (MDST…FGIF), 37–72 (IPDD…ILGD), 95–130 (DEDE…LGLK), and 133–168 (RTAD…GGFA). Ca(2+) contacts are provided by aspartate 14, asparagine 16, aspartate 18, arginine 20, glutamate 25, aspartate 50, asparagine 52, aspartate 54, cysteine 56, glutamate 61, aspartate 108, asparagine 110, aspartate 112, glutamate 119, aspartate 146, aspartate 148, aspartate 150, arginine 152, and glutamate 157.

Its function is as follows. Potential calcium sensor. This Oryza sativa subsp. japonica (Rice) protein is Probable calcium-binding protein CML28 (CML28).